An 81-amino-acid polypeptide reads, in one-letter code: Putative membrane protein insertion efficiency factor (81 aa).

It belongs to the UPF0161 family.

It is found in the cell inner membrane. In terms of biological role, could be involved in insertion of integral membrane proteins into the membrane. This chain is Putative membrane protein insertion efficiency factor, found in Thermotoga maritima (strain ATCC 43589 / DSM 3109 / JCM 10099 / NBRC 100826 / MSB8).